Reading from the N-terminus, the 268-residue chain is MQQTLPVTRVSPRVRSLQRFEWPALGLPVTLMLLLVFWQAGVTLSGYPAFILPSPALVAGRFWQALSSGLLWQHTLATLSAALGGFTLALIIALILGYTLAHIRWLEQALAPVLAASQAIPVVAVAPLIILWFGAGLTSKVLVAALITFLPILINTVVAIRSIPRELIEMAYISGANRWQLLRYVEAPLALPVLFGGVRTGLALATTGAVVGEFVAGRVGLGALINIARGLFDTPLIFVALATLALITLTLYVLAGLLERLLVRWEAS.

6 consecutive transmembrane segments (helical) span residues A24–L44, L76–L96, A119–S139, K140–I160, V185–A205, and L236–G256. Residues T75 to A255 enclose the ABC transmembrane type-1 domain.

The protein belongs to the binding-protein-dependent transport system permease family. The complex is likely composed of an ATP-binding protein, a transmembrane protein (RibX) and a solute-binding protein (RibY).

It is found in the cell membrane. Part of an ABC transporter complex that transports riboflavin into the cell. The protein is Riboflavin transport system permease protein RibX of Chloroflexus aurantiacus (strain ATCC 29366 / DSM 635 / J-10-fl).